A 173-amino-acid chain; its full sequence is uncharacterized protein (173 aa).

This is an uncharacterized protein from Bacillus subtilis (strain 168).